The chain runs to 99 residues: Small integral membrane protein 14 (99 aa).

Residues 1-49 lie on the Lumenal side of the membrane; that stretch reads MAEGGFDPCECVCSHEHAMRRLINLLRQSQSYCTDTECLQELPGPSGDN. The chain crosses the membrane as a helical span at residues 50 to 70; that stretch reads GISVTMILVAWMVIALILFLL. Residues 71-99 lie on the Cytoplasmic side of the membrane; sequence RPPNLRGSSLPGKPTSPHNGQDPPAPPVD. The interval 78 to 99 is disordered; sequence SSLPGKPTSPHNGQDPPAPPVD.

It localises to the endoplasmic reticulum membrane. The sequence is that of Small integral membrane protein 14 (SMIM14) from Homo sapiens (Human).